A 238-amino-acid polypeptide reads, in one-letter code: Probable 2-phosphosulfolactate phosphatase (238 aa).

This sequence belongs to the ComB family. Mg(2+) serves as cofactor.

It catalyses the reaction (2R)-O-phospho-3-sulfolactate + H2O = (2R)-3-sulfolactate + phosphate. The protein is Probable 2-phosphosulfolactate phosphatase of Clostridium botulinum (strain Eklund 17B / Type B).